We begin with the raw amino-acid sequence, 538 residues long: MTDLNQLTQELGALGIHDVQEVVYNPSYELLFAEETKPGLEGYEKGTVTNQGAVAVNTGIFTGRSPKDKYIVLDDKTKDTVWWTSEKVKNDNKPMSQDTWNSLKGLVADQLSGKRLFVVDAFCGANKDTRLAVRVVTEVAWQAHFVTNMFIRPSAEELKGFKPDFVVMNGAKCTNPNWKEQGLNSENFVAFNITEGVQLIGGTWYGGEMKKGMFSMMNYFLPLRGIASMHCSANVGKDGDTAIFFGLSGTGKTTLSTDPKRQLIGDDEHGWDDEGVFNFEGGCYAKTINLSAENEPDIYGAIKRDALLENVVVLDNGDVDYADGSKTENTRVSYPIYHIQNIVKPVSKAGPATKVIFLSADAFGVLPPVSKLTPEQTKYYFLSGFTAKLAGTERGITEPTPTFSACFGAAFLSLHPTQYAEVLVKRMQESGAEAYLVNTGWNGTGKRISIKDTRGIIDAILDGSIDKAEMGSLPIFDFSIPKALPGVNPAILDPRDTYADKAQWEEKAQDLAGRFVKNFEKYTGTAEGQALVAAGPKA.

Residues arginine 64, tyrosine 205, and lysine 211 each coordinate substrate. Residues lysine 211, histidine 230, and 246-254 (GLSGTGKTT) each bind ATP. Mn(2+) is bound by residues lysine 211 and histidine 230. Aspartate 267 is a binding site for Mn(2+). Residues glutamate 295, arginine 331, 447–448 (RI), and threonine 453 each bind ATP. A substrate-binding site is contributed by arginine 331.

This sequence belongs to the phosphoenolpyruvate carboxykinase (ATP) family. Monomer. Mn(2+) serves as cofactor.

Its subcellular location is the cytoplasm. It catalyses the reaction oxaloacetate + ATP = phosphoenolpyruvate + ADP + CO2. The protein operates within carbohydrate biosynthesis; gluconeogenesis. Functionally, involved in the gluconeogenesis. Catalyzes the conversion of oxaloacetate (OAA) to phosphoenolpyruvate (PEP) through direct phosphoryl transfer between the nucleoside triphosphate and OAA. This is Phosphoenolpyruvate carboxykinase (ATP) from Mannheimia succiniciproducens (strain KCTC 0769BP / MBEL55E).